A 428-amino-acid chain; its full sequence is Histidine--tRNA ligase (428 aa).

This sequence belongs to the class-II aminoacyl-tRNA synthetase family. In terms of assembly, homodimer.

It localises to the cytoplasm. The enzyme catalyses tRNA(His) + L-histidine + ATP = L-histidyl-tRNA(His) + AMP + diphosphate + H(+). This Staphylococcus carnosus (strain TM300) protein is Histidine--tRNA ligase.